A 118-amino-acid polypeptide reads, in one-letter code: Large ribosomal subunit protein uL18 (118 aa).

It belongs to the universal ribosomal protein uL18 family. As to quaternary structure, part of the 50S ribosomal subunit; part of the 5S rRNA/L5/L18/L25 subcomplex. Contacts the 5S and 23S rRNAs.

This is one of the proteins that bind and probably mediate the attachment of the 5S RNA into the large ribosomal subunit, where it forms part of the central protuberance. The sequence is that of Large ribosomal subunit protein uL18 from Campylobacter lari (strain RM2100 / D67 / ATCC BAA-1060).